The primary structure comprises 315 residues: Homoserine kinase (315 aa).

ATP is bound at residue P97 to T107.

Belongs to the GHMP kinase family. Homoserine kinase subfamily.

It is found in the cytoplasm. It catalyses the reaction L-homoserine + ATP = O-phospho-L-homoserine + ADP + H(+). It participates in amino-acid biosynthesis; L-threonine biosynthesis; L-threonine from L-aspartate: step 4/5. Catalyzes the ATP-dependent phosphorylation of L-homoserine to L-homoserine phosphate. The chain is Homoserine kinase from Prochlorococcus marinus (strain MIT 9301).